The chain runs to 156 residues: MPRRRVIGQRKILSDPKFGSDLLAKFVNILMVDGKKSTAEKIVYTALDTMTERSGEECLSVFEKALENVRPAVEVKSRRVGGSTYQVPVEVRPVRRNALAMRWLVEAARKRGEKSMAQRLAGEMLDAADNKGTAVKKREDVHRMADANKAFAHYRW.

This sequence belongs to the universal ribosomal protein uS7 family. Part of the 30S ribosomal subunit. Contacts proteins S9 and S11.

Functionally, one of the primary rRNA binding proteins, it binds directly to 16S rRNA where it nucleates assembly of the head domain of the 30S subunit. Is located at the subunit interface close to the decoding center, probably blocks exit of the E-site tRNA. The sequence is that of Small ribosomal subunit protein uS7 from Photobacterium profundum (strain SS9).